Reading from the N-terminus, the 499-residue chain is Multiphosphoryl transfer protein (499 aa).

One can recognise a PTS EIIA type-2 domain in the interval 2–142; that stretch reads LELSESNIHL…AEFCAILMGE (141 aa). Residue histidine 62 is the Tele-phosphohistidine intermediate; for EIIA activity of the active site. Phosphohistidine; by HPr is present on histidine 62. The segment at 155–285 is m domain; the sequence is SLDVNTQSLL…SDVETQSVEG (131 aa). Residues 286-376 form the HPr 1 domain; it reads AVVGTFTIRN…KAIANGLGEN (91 aa). Residue histidine 300 is the Pros-phosphohistidine intermediate; for HPr 1 activity of the active site. Histidine 300 is modified (phosphohistidine). Positions 378-409 are linker; it reads SAVPPSEPDTIEIMGDQIHTPAVTEDDNLPAN. Residues 410 to 499 form the HPr 2 domain; it reads AIEAVFVIKN…GAVIESGLGE (90 aa). The residue at position 424 (histidine 424) is a Phosphohistidine. The active-site Pros-phosphohistidine intermediate; for HPr 2 activity is the histidine 424.

The protein resides in the cytoplasm. The phosphoenolpyruvate-dependent sugar phosphotransferase system (sugar PTS), a major carbohydrate active transport system, catalyzes the phosphorylation of incoming sugar substrates concomitantly with their translocation across the cell membrane. The enzyme II FruAB PTS system is involved in fructose transport. The chain is Multiphosphoryl transfer protein (fruB) from Haemophilus influenzae (strain ATCC 51907 / DSM 11121 / KW20 / Rd).